A 102-amino-acid polypeptide reads, in one-letter code: uncharacterized protein (102 aa).

2 helical membrane passes run 21–43 and 58–80; these read FSSS…TPVF and SFAV…YFFC.

Its subcellular location is the membrane. This is an uncharacterized protein from Saccharomyces cerevisiae (strain ATCC 204508 / S288c) (Baker's yeast).